Here is a 373-residue protein sequence, read N- to C-terminus: Ubiquitin carboxyl-terminal hydrolase 50 (373 aa).

One can recognise a USP domain in the interval 44 to 364; the sequence is TGLRNLGNTC…TAYLLFYSCQ (321 aa). The Nucleophile role is filled by Cys53. His322 functions as the Proton acceptor in the catalytic mechanism.

The protein belongs to the peptidase C19 family.

It localises to the cytoplasm. The protein resides in the cytoskeleton. Its subcellular location is the microtubule organizing center. The protein localises to the centrosome. It is found in the nucleus. It catalyses the reaction Thiol-dependent hydrolysis of ester, thioester, amide, peptide and isopeptide bonds formed by the C-terminal Gly of ubiquitin (a 76-residue protein attached to proteins as an intracellular targeting signal).. Deubiquitinating enzyme that removes conjugated ubiquitin from specific proteins to regulate different cellular processes. Regulates the inflammasome signaling pathway by deubiquitinating 'Lys-63'-linked polyubiquitination of the PYCARD/ASC adapter protein. Regulates the ubiquitination and stability of the ACE2 protein. Acts as a negative regulator of the G2/M checkpoint pathway, by preventing serine/threonine kinase WEE1 degradation, thereby repressing entry into mitosis following activation of the G2/M DNA damage checkpoint. This chain is Ubiquitin carboxyl-terminal hydrolase 50 (USP50), found in Macaca fascicularis (Crab-eating macaque).